Here is a 201-residue protein sequence, read N- to C-terminus: Peptide deformylase (201 aa).

The tract at residues 1–34 (MSLNFAAMARQSERQASTVMVPKGEEQPESPKIH) is disordered. Basic and acidic residues predominate over residues 23–32 (KGEEQPESPK). Positions 121 and 163 each coordinate Fe cation. The active site involves Glu164. Residue His167 participates in Fe cation binding.

It belongs to the polypeptide deformylase family. Fe(2+) serves as cofactor.

It catalyses the reaction N-terminal N-formyl-L-methionyl-[peptide] + H2O = N-terminal L-methionyl-[peptide] + formate. Removes the formyl group from the N-terminal Met of newly synthesized proteins. Requires at least a dipeptide for an efficient rate of reaction. N-terminal L-methionine is a prerequisite for activity but the enzyme has broad specificity at other positions. The sequence is that of Peptide deformylase from Synechococcus sp. (strain RCC307).